Consider the following 666-residue polypeptide: Non-receptor tyrosine-protein kinase TNK1 (666 aa).

A phosphoserine mark is found at Ser-60 and Ser-96. Residues Val-116–Leu-377 form the Protein kinase domain. ATP contacts are provided by residues Leu-122–Val-130 and Lys-148. Asp-245 serves as the catalytic Proton acceptor. Phosphoserine occurs at positions 255 and 411. Positions Ala-380 to Ala-445 constitute an SH3 domain. The interval Gly-446–Leu-493 is disordered. Ser-502 carries the phosphoserine modification. Residues Val-506–Ala-579 form a disordered region. Position 514 is a phosphothreonine (Thr-514). Ser-519 is modified (phosphoserine). Over residues Gln-531–Pro-541 the composition is skewed to pro residues. The span at Leu-542–Pro-552 shows a compositional bias: low complexity. At Ser-582 the chain carries Phosphoserine.

Belongs to the protein kinase superfamily. Tyr protein kinase family. In terms of assembly, interacts with the SH3 domain of PLCG1 via its Pro-rich domain. In terms of processing, autophosphorylated on tyrosine residues. Expressed in all umbilical cord blood, bone marrow and adult blood cell sub-populations and in several leukemia cell lines. Highly expressed in fetal blood, brain, lung, liver and kidney. Detected at lower levels in adult prostate, testis, ovary, small intestine and colon. Not expressed in adult lung, liver, kidney or brain.

It localises to the cytoplasm. The protein resides in the membrane. It catalyses the reaction L-tyrosyl-[protein] + ATP = O-phospho-L-tyrosyl-[protein] + ADP + H(+). Functionally, involved in negative regulation of cell growth. Has tumor suppressor properties. Plays a negative regulatory role in the Ras-MAPK pathway. May function in signaling pathways utilized broadly during fetal development and more selectively in adult tissues and in cells of the lymphohematopoietic system. Could specifically be involved in phospholipid signal transduction. This chain is Non-receptor tyrosine-protein kinase TNK1, found in Homo sapiens (Human).